Here is a 687-residue protein sequence, read N- to C-terminus: MAAFTFENFLSGAYTGLPIDKFRALGLNTEDYDEQRWEMLVKCVDSGLMQFSCSRDEALVLLWNEEELPKDDDDEVPYEVPCWTPDTDATVIDDVSEWLAEKTSVRDTVVVCSDYDAVSETPVEVLSVELEEDSEEDTIADVCLDARRKSFRDYFTIVEEEFVEEDPLISLNDGNVCPVRTHEVTSLEKPVMLDVGRRCDRVNLESLQGAINMNLPSHAYFDDTWHQYFVEGSKLDVDFDNIRLRQSEVFCDRDLDRYYQPELFAGASSRRIGTQKEALVAIRKRNADVPELADSVDVERLSESVAKKFLSSYVCDLKPVVGVMEKMRAYHQKWGDKIDPMFLLKEHNLQRYEHMIKTDVKPTVAHSMHVERAIPATITFHGKSICAGFSPSFTALFDEFQKSLDERVVIPSGPISTIEMDFDIRNKYYLEVDLSKFDKSQGLLHLEFQRKILCKIGLPAHLANWWCDFHYKSFISDPRAKVSFNCSFQRRTGDAFTFFGNTLVTMAMFSFCYDTRQFEKMLFAGDDSLAISSSPIVGCSDYFVSLFNMEAKIMDPGVPYICSKFLVSDELGRCFSAPDPIREFQRLGKKKISADNDDALFEQYVGFKDRMSHMRNFSEYEIQQLKIFFNLKYKQSGEVIEDYMGACMFYSDNFKNFKTLFTKTCAPLVAALNKRVKDKPFRLPPSL.

One can recognise a RdRp catalytic domain in the interval 427–540; the sequence is KYYLEVDLSK…ISSSPIVGCS (114 aa).

Belongs to the ssRNA positive-strand viruses RNA-directed RNA polymerase family. In terms of assembly, interacts with replication protein 1a.

The catalysed reaction is RNA(n) + a ribonucleoside 5'-triphosphate = RNA(n+1) + diphosphate. In terms of biological role, RNA-dependent RNA polymerase which replicates the viral genome composed of 3 RNA segments, RNA1, RNA2 and RNA3. The polypeptide is RNA-directed RNA polymerase 2a (Solanum lycopersicum (Tomato)).